The chain runs to 199 residues: Recombination protein RecR (199 aa).

The C4-type zinc finger occupies 56 to 71 (CATCGNVAQEELCNIC). Residues 79 to 174 (SVICVVEEPK…KVTRLASGLP (96 aa)) form the Toprim domain.

This sequence belongs to the RecR family.

Its function is as follows. May play a role in DNA repair. It seems to be involved in an RecBC-independent recombinational process of DNA repair. It may act with RecF and RecO. This Streptomyces avermitilis (strain ATCC 31267 / DSM 46492 / JCM 5070 / NBRC 14893 / NCIMB 12804 / NRRL 8165 / MA-4680) protein is Recombination protein RecR.